Here is a 196-residue protein sequence, read N- to C-terminus: Small heat shock protein C3 (196 aa).

The region spanning 88 to 196 (SAYSSSAIRT…EKDAKEIPIQ (109 aa)) is the sHSP domain.

It belongs to the small heat shock protein (HSP20) family.

This chain is Small heat shock protein C3 (hspc3-1), found in Rickettsia felis (strain ATCC VR-1525 / URRWXCal2) (Rickettsia azadi).